The primary structure comprises 230 residues: MTANVTVSSMYLFTVLLLLFNVYVNSQDTDAQLCQMCEGTIRHDSPVWSFCITKGYVKGHCCFKNNTSDVDTIIGLDLSNCSISHVEHLYNSSTALIIDLSNNPISNLSDYVFQGFSQLTQLLLPSKLECPGGRASWEKVEVKSITRICEGQKNACNQTVQMPLVCPENSLCSPYGPGFFECSCLNNFHGYKCMRQGEFPLVKVLGILTASTVVVSSVLWFTQRRKVKNT.

A signal peptide spans 1 to 26; that stretch reads MTANVTVSSMYLFTVLLLLFNVYVNS. Residues 27–200 are Extracellular-facing; it reads QDTDAQLCQM…YKCMRQGEFP (174 aa). The 43-residue stretch at 152-194 folds into the EGF-like domain; that stretch reads QKNACNQTVQMPLVCPENSLCSPYGPGFFECSCLNNFHGYKCM. Disulfide bonds link Cys-156-Cys-172, Cys-166-Cys-182, and Cys-184-Cys-193. The helical transmembrane segment at 201–221 threads the bilayer; the sequence is LVKVLGILTASTVVVSSVLWF. At 222–230 the chain is on the cytoplasmic side; that stretch reads TQRRKVKNT.

It localises to the nucleus envelope. The protein resides in the cell membrane. It is found in the lysosome membrane. In terms of biological role, involved in osteoblast cell differentiation. May play a role in inducing the cell cycle arrest. In Danio rerio (Zebrafish), this protein is All-trans retinoic acid-induced differentiation factor (atraid).